Here is a 108-residue protein sequence, read N- to C-terminus: Glutaredoxin-1 (108 aa).

One can recognise a Glutaredoxin domain in the interval 3–106; that stretch reads EEFVQQRLAN…DILSSIGVLR (104 aa). Cys23 and Cys26 form a disulfide bridge.

It belongs to the glutaredoxin family.

The protein localises to the virion. Has thioltransferase and dehydroascorbate reductase activities. The sequence is that of Glutaredoxin-1 (OPG075) from Ectromelia virus (strain Moscow) (ECTV).